A 500-amino-acid polypeptide reads, in one-letter code: Potassium/proton antiporter CemA (500 aa).

The chain crosses the membrane as a helical span at residues 129–149 (LFLTTIKTIFILFFVPFLVNF). Residues 204-354 (HQTHRDSKPL…GSLDSIKNKD (151 aa)) are insert. The next 3 helical transmembrane spans lie at 378 to 398 (ITNFFADLLSLFTLLYLLITL), 425 to 445 (ILLITDLLVGYHSSNLWELFF), and 461 to 481 (IFLLVATLPVLLDVLFKYLIF).

It belongs to the CemA family.

The protein resides in the plastid. It is found in the chloroplast inner membrane. The enzyme catalyses K(+)(in) + H(+)(out) = K(+)(out) + H(+)(in). In terms of biological role, contributes to K(+)/H(+) antiport activity by supporting proton efflux to control proton extrusion and homeostasis in chloroplasts in a light-dependent manner to modulate photosynthesis. Prevents excessive induction of non-photochemical quenching (NPQ) under continuous-light conditions. Indirectly promotes efficient inorganic carbon uptake into chloroplasts. The sequence is that of Potassium/proton antiporter CemA from Chlamydomonas reinhardtii (Chlamydomonas smithii).